The following is a 773-amino-acid chain: Phenylalanine--tRNA ligase beta subunit (773 aa).

One can recognise a tRNA-binding domain in the interval 39 to 150 (LKAPDKVVVG…GKLELGRPLN (112 aa)). Residues 391-467 (KELPIIPISI…RIIGIDNIAS (77 aa)) enclose the B5 domain. Mg(2+) contacts are provided by Asp-445, Asp-451, Glu-454, and Glu-455. The FDX-ACB domain maps to 682–773 (SKFPAITRDL…TLKNLGLDLR (92 aa)).

It belongs to the phenylalanyl-tRNA synthetase beta subunit family. Type 1 subfamily. As to quaternary structure, tetramer of two alpha and two beta subunits. The cofactor is Mg(2+).

Its subcellular location is the cytoplasm. It catalyses the reaction tRNA(Phe) + L-phenylalanine + ATP = L-phenylalanyl-tRNA(Phe) + AMP + diphosphate + H(+). In Campylobacter jejuni (strain RM1221), this protein is Phenylalanine--tRNA ligase beta subunit.